Reading from the N-terminus, the 352-residue chain is UDP-3-O-acylglucosamine N-acyltransferase (352 aa).

Histidine 244 (proton acceptor) is an active-site residue.

This sequence belongs to the transferase hexapeptide repeat family. LpxD subfamily. In terms of assembly, homotrimer.

It catalyses the reaction a UDP-3-O-[(3R)-3-hydroxyacyl]-alpha-D-glucosamine + a (3R)-hydroxyacyl-[ACP] = a UDP-2-N,3-O-bis[(3R)-3-hydroxyacyl]-alpha-D-glucosamine + holo-[ACP] + H(+). It functions in the pathway bacterial outer membrane biogenesis; LPS lipid A biosynthesis. Catalyzes the N-acylation of UDP-3-O-acylglucosamine using 3-hydroxyacyl-ACP as the acyl donor. Is involved in the biosynthesis of lipid A, a phosphorylated glycolipid that anchors the lipopolysaccharide to the outer membrane of the cell. In Leptospira biflexa serovar Patoc (strain Patoc 1 / Ames), this protein is UDP-3-O-acylglucosamine N-acyltransferase.